The sequence spans 583 residues: Aspartate--tRNA(Asp/Asn) ligase (583 aa).

L-aspartate is bound at residue glutamate 173. Positions 197 to 200 (QMFK) are aspartate. Position 219 (arginine 219) interacts with L-aspartate. Residues 219 to 221 (RDE) and glutamine 228 each bind ATP. Histidine 447 provides a ligand contact to L-aspartate. Glutamate 481 serves as a coordination point for ATP. Arginine 488 provides a ligand contact to L-aspartate. 533–536 (GLDR) is a binding site for ATP.

It belongs to the class-II aminoacyl-tRNA synthetase family. Type 1 subfamily. In terms of assembly, homodimer.

Its subcellular location is the cytoplasm. It catalyses the reaction tRNA(Asx) + L-aspartate + ATP = L-aspartyl-tRNA(Asx) + AMP + diphosphate. Functionally, aspartyl-tRNA synthetase with relaxed tRNA specificity since it is able to aspartylate not only its cognate tRNA(Asp) but also tRNA(Asn). Reaction proceeds in two steps: L-aspartate is first activated by ATP to form Asp-AMP and then transferred to the acceptor end of tRNA(Asp/Asn). The sequence is that of Aspartate--tRNA(Asp/Asn) ligase from Elusimicrobium minutum (strain Pei191).